Consider the following 722-residue polypeptide: MRALGLVGLVGVANAVCPYMTGELGRRDTNPDATEATEEFLSEYYLDDTDSYLTTDVGGPIEDQQSLKAGARGSTLLEDFIFRQKIQRFDHERVPERAVHARGAGAHGVFTSYGDFSNITAASFLSAEGKETPVFVRFSTVAGSRGSSDLARDVHGFATRFYTDEGNFDIVGNNIPVFFIQDAIQFPDLIHAVKPKGDREIPQAATAHDAAWDFFSQQPSTLHTLLWAMAGHGIPRSFRHVDGFGVHTFRLVTEDGSTKLVKFHWKTLQGLASMVWEEAQQISGKNPDYMRQDLFESIEAGRYPEWELNVQIMDEEDQLRFGFDLFDPTKIVPEEYVPLTPLGKMTLNRNPRNYFAETEQVMFQPGHVVRGVDFTEDPLLQQGRLFSYLDTQLNRNGGPNFEQLPINQPRVAIHNNNRDGAGQMFIPLNPDAYSPNTLKGSTLKQANQTAGRGFFTAPDRTANGNLVRAKSSTFDDAWSQPRLFWNSLLPAEKQFVVNAIRFENANVKSDVVKNNVIVQLNRISNDLATRVAKAIGVDAPEPDNTYYHDNTTSNIGAFGHRLQSLAGLKIAVLASVDAEESFSAATALKAELSNDNLDVIVVAERFSNGVNQTYSASDAIQFDAVVVAPGAEKLFGAKSAANSSSTLYPAGRPLEILVDAFRFGKPVAALGSGSTAFDNAGINTAVEGVYVADAVDESFANNLEEGLTVFKFLDRFALDSDE.

The N-terminal stretch at 1–15 (MRALGLVGLVGVANA) is a signal peptide. Catalysis depends on residues histidine 100 and asparagine 173. Tyrosine 388 serves as a coordination point for heme.

The protein belongs to the catalase family. It depends on heme as a cofactor.

The protein localises to the secreted. The catalysed reaction is 2 H2O2 = O2 + 2 H2O. Its function is as follows. Occurs in almost all aerobically respiring organisms and serves to protect cells from the toxic effects of hydrogen peroxide. This Emericella nidulans (strain FGSC A4 / ATCC 38163 / CBS 112.46 / NRRL 194 / M139) (Aspergillus nidulans) protein is Catalase B (catB).